A 387-amino-acid polypeptide reads, in one-letter code: G2/mitotic-specific cyclin-B2 (387 aa).

It belongs to the cyclin family. Cyclin AB subfamily. As to quaternary structure, interacts with the CDK1 protein kinase to form a serine/threonine kinase holoenzyme complex also known as maturation promoting factor (MPF). The cyclin subunit imparts substrate specificity to the complex.

Essential for the control of the cell cycle at the G2/M (mitosis) transition. In Oryzias latipes (Japanese rice fish), this protein is G2/mitotic-specific cyclin-B2 (ccnb2).